Reading from the N-terminus, the 131-residue chain is Profilin (131 aa).

Belongs to the profilin family. Occurs in many kinds of cells as a complex with monomeric actin in a 1:1 ratio.

It is found in the cytoplasm. The protein resides in the cytoskeleton. Its function is as follows. Binds to actin and affects the structure of the cytoskeleton. At high concentrations, profilin prevents the polymerization of actin, whereas it enhances it at low concentrations. By binding to PIP2, it inhibits the formation of IP3 and DG. The polypeptide is Profilin (Pyrus communis (Pear)).